Reading from the N-terminus, the 188-residue chain is CASP-like protein 4B3 (188 aa).

The interval 1-21 is disordered; it reads MSFSPASSEPHDAPAAAGSSV. The Cytoplasmic portion of the chain corresponds to 1 to 42; it reads MSFSPASSEPHDAPAAAGSSVPASRSIAERWKMEAAPIRARL. A helical transmembrane segment spans residues 43-63; that stretch reads LLRAFAWLFSLLALVVMATDV. The Extracellular segment spans residues 64 to 76; that stretch reads HGRGGAQDFSTYP. Residues 77–97 traverse the membrane as a helical segment; sequence EYNYCLGMSIIALLYATAQLV. Residues 98–114 lie on the Cytoplasmic side of the membrane; sequence RDAHRLSSGRDLVAGRK. The chain crosses the membrane as a helical span at residues 115 to 135; the sequence is AAAVVDFAGDQVVAYSLISGL. Topologically, residues 136 to 156 are extracellular; sequence SAAAPVTDYMRQATDNLFNDS. Residue Asn-154 is glycosylated (N-linked (GlcNAc...) asparagine). The helical transmembrane segment at 157-177 threads the bilayer; sequence AAAAISLAFFAFLAISLSALI. The Cytoplasmic segment spans residues 178–188; the sequence is SGYNLSLEAIV.

It belongs to the Casparian strip membrane proteins (CASP) family. In terms of assembly, homodimer and heterodimers.

It is found in the cell membrane. This Hordeum vulgare subsp. vulgare (Domesticated barley) protein is CASP-like protein 4B3.